We begin with the raw amino-acid sequence, 413 residues long: Tryptophan synthase beta chain (413 aa).

At Lys-106 the chain carries N6-(pyridoxal phosphate)lysine.

Belongs to the TrpB family. As to quaternary structure, tetramer of two alpha and two beta chains. The cofactor is pyridoxal 5'-phosphate.

It carries out the reaction (1S,2R)-1-C-(indol-3-yl)glycerol 3-phosphate + L-serine = D-glyceraldehyde 3-phosphate + L-tryptophan + H2O. It functions in the pathway amino-acid biosynthesis; L-tryptophan biosynthesis; L-tryptophan from chorismate: step 5/5. In terms of biological role, the beta subunit is responsible for the synthesis of L-tryptophan from indole and L-serine. The polypeptide is Tryptophan synthase beta chain (Methylobacterium radiotolerans (strain ATCC 27329 / DSM 1819 / JCM 2831 / NBRC 15690 / NCIMB 10815 / 0-1)).